A 399-amino-acid polypeptide reads, in one-letter code: Succinate--CoA ligase [ADP-forming] subunit beta (399 aa).

The ATP-grasp domain occupies 9–254 (KELLAKYGVG…ETEEDPAEIE (246 aa)). Residues Lys-46, 53–55 (GRG), Val-112, and Glu-117 contribute to the ATP site. Mg(2+) contacts are provided by Asn-209 and Asp-223. Substrate is bound by residues Asn-274 and 331 to 333 (GIM).

The protein belongs to the succinate/malate CoA ligase beta subunit family. In terms of assembly, heterotetramer of two alpha and two beta subunits. The cofactor is Mg(2+).

It catalyses the reaction succinate + ATP + CoA = succinyl-CoA + ADP + phosphate. The catalysed reaction is GTP + succinate + CoA = succinyl-CoA + GDP + phosphate. The protein operates within carbohydrate metabolism; tricarboxylic acid cycle; succinate from succinyl-CoA (ligase route): step 1/1. Succinyl-CoA synthetase functions in the citric acid cycle (TCA), coupling the hydrolysis of succinyl-CoA to the synthesis of either ATP or GTP and thus represents the only step of substrate-level phosphorylation in the TCA. The beta subunit provides nucleotide specificity of the enzyme and binds the substrate succinate, while the binding sites for coenzyme A and phosphate are found in the alpha subunit. This chain is Succinate--CoA ligase [ADP-forming] subunit beta, found in Novosphingobium aromaticivorans (strain ATCC 700278 / DSM 12444 / CCUG 56034 / CIP 105152 / NBRC 16084 / F199).